The sequence spans 41 residues: Large ribosomal subunit protein bL36 (41 aa).

This sequence belongs to the bacterial ribosomal protein bL36 family.

This chain is Large ribosomal subunit protein bL36 (rpmJ), found in Agrobacterium fabrum (strain C58 / ATCC 33970) (Agrobacterium tumefaciens (strain C58)).